The sequence spans 678 residues: UvrABC system protein C (678 aa).

In terms of domain architecture, GIY-YIG spans 16-95; it reads VEPGVYRFRD…IKEFDPRFNI (80 aa). In terms of domain architecture, UVR spans 208–243; the sequence is DRLIREMEQQMTAAAEDLDFERAARLRDNIGAMRRA. A compositionally biased stretch (low complexity) spans 649–667; the sequence is EAPPEPGAEAPPDSGAAAA. Residues 649–678 are disordered; sequence EAPPEPGAEAPPDSGAAAAVMGNDQSRVPG.

The protein belongs to the UvrC family. In terms of assembly, interacts with UvrB in an incision complex.

It is found in the cytoplasm. Its function is as follows. The UvrABC repair system catalyzes the recognition and processing of DNA lesions. UvrC both incises the 5' and 3' sides of the lesion. The N-terminal half is responsible for the 3' incision and the C-terminal half is responsible for the 5' incision. The chain is UvrABC system protein C from Mycolicibacterium gilvum (strain PYR-GCK) (Mycobacterium gilvum (strain PYR-GCK)).